The sequence spans 423 residues: Pre-mRNA-splicing regulator WTAP (423 aa).

The interval 234-423 (QQLSQMNQTQ…TSNASAGSVL (190 aa)) is disordered. 4 stretches are compositionally biased toward polar residues: residues 239–276 (MNQT…SSNV), 285–301 (NGPS…SGSS), 358–377 (DSPT…TDSN), and 392–404 (TAGT…NGLD). Positions 405 to 423 (SSAAAVATNTSNASAGSVL) are enriched in low complexity.

It belongs to the fl(2)d family. Component of the WMM complex, a N6-methyltransferase complex composed of a catalytic subcomplex, named MAC, and of an associated subcomplex, named MACOM. Component of the MACOM subcomplex.

It is found in the nucleus speckle. Its subcellular location is the nucleus. It localises to the nucleoplasm. In terms of biological role, associated component of the WMM complex, a complex that mediates N6-methyladenosine (m6A) methylation of RNAs, a modification that plays a role in the efficiency of mRNA splicing and RNA processing. The sequence is that of Pre-mRNA-splicing regulator WTAP from Danio rerio (Zebrafish).